Consider the following 299-residue polypeptide: ATP phosphoribosyltransferase (299 aa).

It belongs to the ATP phosphoribosyltransferase family. Long subfamily. It depends on Mg(2+) as a cofactor.

Its subcellular location is the cytoplasm. It catalyses the reaction 1-(5-phospho-beta-D-ribosyl)-ATP + diphosphate = 5-phospho-alpha-D-ribose 1-diphosphate + ATP. Its pathway is amino-acid biosynthesis; L-histidine biosynthesis; L-histidine from 5-phospho-alpha-D-ribose 1-diphosphate: step 1/9. With respect to regulation, feedback inhibited by histidine. Functionally, catalyzes the condensation of ATP and 5-phosphoribose 1-diphosphate to form N'-(5'-phosphoribosyl)-ATP (PR-ATP). Has a crucial role in the pathway because the rate of histidine biosynthesis seems to be controlled primarily by regulation of HisG enzymatic activity. In Shewanella sediminis (strain HAW-EB3), this protein is ATP phosphoribosyltransferase.